The sequence spans 243 residues: NAD-dependent protein deacetylase (243 aa).

One can recognise a Deacetylase sirtuin-type domain in the interval 1 to 243 (MKHDLETLKH…VSVVKSLMTE (243 aa)). Residues A24, F35, R36, Q105, I107, D108, and H123 each contribute to the NAD(+) site. F35 provides a ligand contact to nicotinamide. The nicotinamide site is built by I107 and D108. H123 functions as the Proton acceptor in the catalytic mechanism. Zn(2+) contacts are provided by C131, C134, C151, and C154. S192, S193, N215, and D232 together coordinate NAD(+).

It belongs to the sirtuin family. Class U subfamily. The cofactor is Zn(2+).

Its subcellular location is the cytoplasm. It carries out the reaction N(6)-acetyl-L-lysyl-[protein] + NAD(+) + H2O = 2''-O-acetyl-ADP-D-ribose + nicotinamide + L-lysyl-[protein]. Functionally, NAD-dependent protein deacetylase which modulates the activities of several enzymes which are inactive in their acetylated form. The polypeptide is NAD-dependent protein deacetylase (Staphylococcus aureus (strain COL)).